A 311-amino-acid polypeptide reads, in one-letter code: Iron-binding protein YfeA (311 aa).

Positions 1 to 31 are cleaved as a signal peptide; that stretch reads MIERLNSPFLRAAALFTIVAFSSLISTAALA. Residues His-76, His-141, Glu-207, and Asp-282 each contribute to the Fe(2+) site.

The protein belongs to the bacterial solute-binding protein 9 family. Monomer.

It is found in the periplasm. Part of the ATP-binding cassette (ABC) transport system YfeABC involved in iron import. Binds iron with high affinity and specificity and delivers it to the membrane permease for translocation into the cytoplasm. Also binds Mn(2+) and Zn(2+). The sequence is that of Iron-binding protein YfeA (yfeA) from Yersinia pestis.